Consider the following 92-residue polypeptide: Acylphosphatase (92 aa).

An Acylphosphatase-like domain is found at 5 to 92; the sequence is RAHVFISGRV…GKEGIFTIVW (88 aa). Catalysis depends on residues R20 and N38.

This sequence belongs to the acylphosphatase family.

It catalyses the reaction an acyl phosphate + H2O = a carboxylate + phosphate + H(+). The chain is Acylphosphatase (acyP) from Chloroflexus aurantiacus (strain ATCC 29366 / DSM 635 / J-10-fl).